A 255-amino-acid chain; its full sequence is Pyrroloquinoline-quinone synthase (255 aa).

The protein belongs to the PqqC family.

It catalyses the reaction 6-(2-amino-2-carboxyethyl)-7,8-dioxo-1,2,3,4,7,8-hexahydroquinoline-2,4-dicarboxylate + 3 O2 = pyrroloquinoline quinone + 2 H2O2 + 2 H2O + H(+). It participates in cofactor biosynthesis; pyrroloquinoline quinone biosynthesis. Functionally, ring cyclization and eight-electron oxidation of 3a-(2-amino-2-carboxyethyl)-4,5-dioxo-4,5,6,7,8,9-hexahydroquinoline-7,9-dicarboxylic-acid to PQQ. This chain is Pyrroloquinoline-quinone synthase, found in Cereibacter sphaeroides (strain ATCC 17029 / ATH 2.4.9) (Rhodobacter sphaeroides).